A 364-amino-acid chain; its full sequence is F-box/kelch-repeat protein At3g23880 (364 aa).

Residues Met-8–His-54 enclose the F-box domain. 2 Kelch repeats span residues Asp-169 to Gly-215 and Ile-216 to Asp-265.

The polypeptide is F-box/kelch-repeat protein At3g23880 (Arabidopsis thaliana (Mouse-ear cress)).